We begin with the raw amino-acid sequence, 172 residues long: Large ribosomal subunit protein uL10 (172 aa).

This sequence belongs to the universal ribosomal protein uL10 family. Part of the ribosomal stalk of the 50S ribosomal subunit. The N-terminus interacts with L11 and the large rRNA to form the base of the stalk. The C-terminus forms an elongated spine to which L12 dimers bind in a sequential fashion forming a multimeric L10(L12)X complex.

Its function is as follows. Forms part of the ribosomal stalk, playing a central role in the interaction of the ribosome with GTP-bound translation factors. This Brucella anthropi (strain ATCC 49188 / DSM 6882 / CCUG 24695 / JCM 21032 / LMG 3331 / NBRC 15819 / NCTC 12168 / Alc 37) (Ochrobactrum anthropi) protein is Large ribosomal subunit protein uL10.